Consider the following 79-residue polypeptide: Conotoxin VnMEKL-024 (79 aa).

The N-terminal stretch at Met-1 to Ala-19 is a signal peptide. Residues Leu-20–Glu-50 constitute a propeptide that is removed on maturation. 3 disulfide bridges follow: Cys-51–Cys-65, Cys-58–Cys-69, and Cys-64–Cys-76.

It belongs to the conotoxin O2 superfamily. As to expression, expressed by the venom duct.

The protein resides in the secreted. This chain is Conotoxin VnMEKL-024, found in Conus ventricosus (Mediterranean cone).